A 390-amino-acid chain; its full sequence is Calcium-binding and spermatid-specific protein 1 (390 aa).

Disordered regions lie at residues 1 to 23 (MAED…TPTE), 82 to 109 (ASLK…KESI), and 146 to 225 (TIDA…TIPD). Acidic residues predominate over residues 162 to 174 (ETQEDSSANDEDT). Residues 184 to 193 (TDVSSSTSSD) show a composition bias toward low complexity. Serine 251 and serine 267 each carry phosphoserine. Residue threonine 280 is modified to Phosphothreonine; by CK2. Position 312 is a phosphoserine (serine 312). Residues 330 to 344 (EPHVDTKNSPEKDAA) are compositionally biased toward basic and acidic residues. Positions 330 to 390 (EPHVDTKNSP…LKEEPDELMM (61 aa)) are disordered. A phosphoserine mark is found at serine 346, serine 356, serine 371, and serine 375. Positions 346–364 (SVTNVTEEFPSVTSVVEQS) are enriched in polar residues.

Expressed in seminiferous tubules of the testis in step 10 spermatids (stage X), subsequently increasing to reach maximal levels of step 18 elongated spermatids (stage VI) (at protein level). Strongly expressed in testis. Weakly expressed in olfactory epithelium. Expressed in spermatids of seminiferous tubules at steps 4-14 (stages IV to XIV of the seminiferous epithelium classification).

The protein resides in the cytoplasm. It localises to the mitochondrion inner membrane. The protein localises to the cell projection. It is found in the cilium. Its subcellular location is the flagellum. The protein resides in the cytoplasmic vesicle. It localises to the secretory vesicle. The protein localises to the acrosome. Calcium-binding protein. Essential for maintaining the structural integrity of the sperm flagella. This chain is Calcium-binding and spermatid-specific protein 1 (Cabs1), found in Rattus norvegicus (Rat).